Here is a 219-residue protein sequence, read N- to C-terminus: Peptide methionine sulfoxide reductase MsrA (219 aa).

The tract at residues 1-20 (MGLFRSPRQNLPTAADALPG) is disordered. The active site involves Cys55.

It belongs to the MsrA Met sulfoxide reductase family.

It carries out the reaction L-methionyl-[protein] + [thioredoxin]-disulfide + H2O = L-methionyl-(S)-S-oxide-[protein] + [thioredoxin]-dithiol. The catalysed reaction is [thioredoxin]-disulfide + L-methionine + H2O = L-methionine (S)-S-oxide + [thioredoxin]-dithiol. In terms of biological role, has an important function as a repair enzyme for proteins that have been inactivated by oxidation. Catalyzes the reversible oxidation-reduction of methionine sulfoxide in proteins to methionine. The polypeptide is Peptide methionine sulfoxide reductase MsrA (Rhodospirillum centenum (strain ATCC 51521 / SW)).